A 69-amino-acid chain; its full sequence is Cytoinsectotoxin-2a (69 aa).

Belongs to the cationic peptide 06 (cytoinsectotoxin) family. In terms of tissue distribution, expressed by the venom gland.

Its subcellular location is the secreted. Functionally, insecticidal and antimicrobial peptide. Has insecticidal activity against larvae of flesh fly S.carnaria. Has antibacterial activity against Gram-positive bacterium B.subtilis B-501 (MIC=1.25 uM) and Gram-negative bacterium E.coli DH5alpha (MIC=2.5 uM). This chain is Cytoinsectotoxin-2a, found in Lachesana tarabaevi (Spider).